We begin with the raw amino-acid sequence, 260 residues long: Sugar fermentation stimulation protein homolog (260 aa).

It belongs to the SfsA family.

The chain is Sugar fermentation stimulation protein homolog from Chloroflexus aggregans (strain MD-66 / DSM 9485).